We begin with the raw amino-acid sequence, 96 residues long: Co-chaperonin GroES (96 aa).

The protein belongs to the GroES chaperonin family. As to quaternary structure, heptamer of 7 subunits arranged in a ring. Interacts with the chaperonin GroEL.

It localises to the cytoplasm. Functionally, together with the chaperonin GroEL, plays an essential role in assisting protein folding. The GroEL-GroES system forms a nano-cage that allows encapsulation of the non-native substrate proteins and provides a physical environment optimized to promote and accelerate protein folding. GroES binds to the apical surface of the GroEL ring, thereby capping the opening of the GroEL channel. The protein is Co-chaperonin GroES of Syntrophomonas wolfei subsp. wolfei (strain DSM 2245B / Goettingen).